Consider the following 208-residue polypeptide: Large ribosomal subunit protein uL4 (208 aa).

The interval 58–77 (RGGGRKPWRQKGTGRARQGS) is disordered. Positions 60 to 71 (GGRKPWRQKGTG) are enriched in basic residues.

The protein belongs to the universal ribosomal protein uL4 family. As to quaternary structure, part of the 50S ribosomal subunit.

Functionally, one of the primary rRNA binding proteins, this protein initially binds near the 5'-end of the 23S rRNA. It is important during the early stages of 50S assembly. It makes multiple contacts with different domains of the 23S rRNA in the assembled 50S subunit and ribosome. In terms of biological role, forms part of the polypeptide exit tunnel. This is Large ribosomal subunit protein uL4 from Caldicellulosiruptor bescii (strain ATCC BAA-1888 / DSM 6725 / KCTC 15123 / Z-1320) (Anaerocellum thermophilum).